The primary structure comprises 189 residues: GTPase NRas (189 aa).

Residues 10–18 (GAGGVGKSA) and 29–30 (VD) each bind GTP. Residues 32-40 (YDPTIEDSY) carry the Effector region motif. 57–61 (DTAGQ) is a binding site for GTP. Ser89 carries the post-translational modification Phosphoserine. 116-119 (NKCD) is a binding site for GTP. A hypervariable region region spans residues 166–185 (YRMKKLNSNDDGTQGCMGLP). Lys170 participates in a covalent cross-link: Glycyl lysine isopeptide (Lys-Gly) (interchain with G-Cter in ubiquitin). Cys181 carries S-palmitoyl cysteine lipidation. The S-farnesyl cysteine moiety is linked to residue Cys186. Positions 187-189 (VVM) are cleaved as a propeptide — removed in mature form.

This sequence belongs to the small GTPase superfamily. Ras family. Interacts (active GTP-bound form preferentially) with RGS14. Interacts (active GTP-bound form) with RASSF7. Interacts (active GTP-bound form) with both SHOC2 and PP1c (all isoforms) to form a tertiary complex; SHOC2 and PP1c preferably bind M-Ras/MRAS, but they also bind K-Ras/KRAS, N-Ras/NRAS and H-Ras/HRAS. Palmitoylated by the ZDHHC9-GOLGA7 complex. Depalmitoylated by ABHD17A, ABHD17B and ABHD17C. A continuous cycle of de- and re-palmitoylation regulates rapid exchange between plasma membrane and Golgi. Post-translationally, acetylation at Lys-104 prevents interaction with guanine nucleotide exchange factors (GEFs). In terms of processing, ubiquitinated by the BCR(LZTR1) E3 ubiquitin ligase complex at Lys-170 in a non-degradative manner, leading to inhibit Ras signaling by decreasing Ras association with membranes. Phosphorylation at Ser-89 enhances NRAS association with its downstream effectors.

The protein localises to the cell membrane. The protein resides in the golgi apparatus membrane. The catalysed reaction is GTP + H2O = GDP + phosphate + H(+). Its activity is regulated as follows. Alternates between an inactive form bound to GDP and an active form bound to GTP. Activated by a guanine nucleotide-exchange factor (GEF) and inactivated by a GTPase-activating protein (GAP). Its function is as follows. Ras proteins bind GDP/GTP and possess intrinsic GTPase activity. The sequence is that of GTPase NRas (NRAS) from Cavia porcellus (Guinea pig).